Here is a 502-residue protein sequence, read N- to C-terminus: Putative F-box/FBD/LRR-repeat protein At5g22610 (502 aa).

An F-box domain is found at 17–63 (EDLISKLPEVLLSQILSYLPTKDIVRTSVLSKRWKSVWLLIPGLDLD). LRR repeat units follow at residues 70–98 (YDTF…KLSI), 99–127 (QKNE…DVEF), 147–180 (CKTL…CLEE), 181–206 (NVYS…TIVK), 208–228 (DDNV…SVGY), 238–263 (YYYD…TFNN), and 344–373 (SVWL…VLET). The 52-residue stretch at 384–435 (VERRVSSVPECLLSSLEFVEIKNRISVDDGALEVARYFVENSVNLQKVVLRL) folds into the FBD domain.

This chain is Putative F-box/FBD/LRR-repeat protein At5g22610, found in Arabidopsis thaliana (Mouse-ear cress).